A 259-amino-acid polypeptide reads, in one-letter code: Isoepoxydon dehydrogenase patN (259 aa).

NADP(+) is bound by residues asparagine 96 and arginine 125. Residues serine 143 and serine 144 each act as proton donor in the active site. NADP(+)-binding residues include tyrosine 158, lysine 162, and isoleucine 191. Tyrosine 158 functions as the Proton acceptor in the catalytic mechanism. Lysine 162 functions as the Lowers pKa of active site Tyr in the catalytic mechanism.

Belongs to the short-chain dehydrogenases/reductases (SDR) family.

The protein resides in the cytoplasm. It is found in the cytosol. It carries out the reaction isoepoxydon + NADP(+) = phyllostine + NADPH + H(+). It participates in mycotoxin biosynthesis; patulin biosynthesis. Isoepoxydon dehydrogenase; part of the gene cluster that mediates the biosynthesis of patulin, an acetate-derived tetraketide mycotoxin produced by several fungal species that shows antimicrobial properties against several bacteria. PatN catalyzes the conversion of isoepoxydon into phyllostine. The pathway begins with the synthesis of 6-methylsalicylic acid by the polyketide synthase (PKS) patK via condensation of acetate and malonate units. The 6-methylsalicylic acid decarboxylase patG then catalyzes the decarboxylation of 6-methylsalicylic acid to yield m-cresol (also known as 3-methylphenol). These first reactions occur in the cytosol. The intermediate m-cresol is then transported into the endoplasmic reticulum where the cytochrome P450 monooxygenase patH converts it to m-hydroxybenzyl alcohol, which is further converted to gentisyl alcohol by the cytochrome P450 monooxygenase patI. The oxidoreductases patJ and patO further convert gentisyl alcohol to isoepoxydon in the vacuole. PatN catalyzes then the transformation of isoepoxydon into phyllostine. The cluster protein patF is responsible for the conversion from phyllostine to neopatulin whereas the alcohol dehydrogenase patD converts neopatulin to E-ascladiol. The steps between isoepoxydon and E-ascladiol occur in the cytosol, and E-ascladiol is probably secreted to the extracellular space by one of the cluster-specific transporters patC or patM. Finally, the secreted patulin synthase patE catalyzes the conversion of E-ascladiol to patulin. The protein is Isoepoxydon dehydrogenase patN of Aspergillus clavatus (strain ATCC 1007 / CBS 513.65 / DSM 816 / NCTC 3887 / NRRL 1 / QM 1276 / 107).